A 149-amino-acid chain; its full sequence is Large ribosomal subunit protein bL9 (149 aa).

It belongs to the bacterial ribosomal protein bL9 family.

Functionally, binds to the 23S rRNA. This is Large ribosomal subunit protein bL9 from Anaeromyxobacter dehalogenans (strain 2CP-C).